The sequence spans 697 residues: Polyribonucleotide nucleotidyltransferase (697 aa).

The Mg(2+) site is built by Asp-490 and Asp-496. The region spanning 557 to 616 (PKVVTMTIKPEKIRDVIGPGGKKINEIIDETGVKLDIEQDGTIFIGAVDKDAIARARSII) is the KH domain. The region spanning 626 to 694 (GQVYEGKVKR…KQGRVNASHK (69 aa)) is the S1 motif domain.

Belongs to the polyribonucleotide nucleotidyltransferase family. It depends on Mg(2+) as a cofactor.

The protein resides in the cytoplasm. It carries out the reaction RNA(n+1) + phosphate = RNA(n) + a ribonucleoside 5'-diphosphate. Functionally, involved in mRNA degradation. Catalyzes the phosphorolysis of single-stranded polyribonucleotides processively in the 3'- to 5'-direction. The protein is Polyribonucleotide nucleotidyltransferase of Staphylococcus saprophyticus subsp. saprophyticus (strain ATCC 15305 / DSM 20229 / NCIMB 8711 / NCTC 7292 / S-41).